Consider the following 823-residue polypeptide: Protein Jade-3 (823 aa).

Residues 1–40 (MKRHRPVSSSESSDECPSTSFTSSSMYRKKSKNPKEQKKS) are disordered. Positions 8 to 20 (SSSESSDECPSTS) are enriched in low complexity. N6-acetyllysine occurs at positions 30, 32, and 35. The PHD-type 1 zinc finger occupies 200 to 250 (DVICDVCRSPDSEEGNDMVFCDKCNVCVHQACYGILKIPEGSWLCRSCVLG). Residues 252–286 (YPQCVLCPKKGGAMKTTRTGTKWAHVSCALWIPEV) form a C2HC pre-PHD-type zinc finger. The PHD-type 2 zinc finger occupies 310–366 (LVCNLCKLKTGACIQCSVKSCITAFHVTCAFEHGLEMKTILDEGDEVKFKSFCLKHS). Disordered stretches follow at residues 543–585 (LKMP…PEEP) and 601–631 (KSNCLQTSRSHSRCETKSSSPTPRAPSAEFY). A compositionally biased stretch (basic and acidic residues) spans 549 to 562 (TSEDCKDSSTETEH). S566 and S578 each carry phosphoserine. K601 is modified (N6-acetyllysine). A Phosphoserine modification is found at S608. K638 bears the N6-acetyllysine mark. A disordered region spans residues 651–676 (SIGNGKNQPNSRVSSSNGLEGNWSGN). K735 is modified (N6-acetyllysine). Positions 756-823 (TGRASYQETD…HPHSHSSMQR (68 aa)) are disordered. Residues S774 and S776 each carry the phosphoserine modification. Over residues 781-809 (EGSKETPRVKRESSDRENPSHDSARECHG) the composition is skewed to basic and acidic residues.

Belongs to the JADE family. As to quaternary structure, component of the HBO1 complex composed at least of ING4 or ING5, MYST2/HBO1, MEAF6, and one of JADE1, JADE2 and JADE3.

Scaffold subunit of some HBO1 complexes, which have a histone H4 acetyltransferase activity. This is Protein Jade-3 (Jade3) from Mus musculus (Mouse).